A 549-amino-acid polypeptide reads, in one-letter code: Cobalt-dependent inorganic pyrophosphatase (549 aa).

CBS domains lie at 74–130 and 252–310; these read EMDK…IWDS and MTKD…VIQV. Residues Lys-100, 116-119, Thr-253, Val-258, and 278-280 each bind AMP; these read STSN and YSN.

The protein belongs to the PPase family. As to quaternary structure, homodimer. Requires Co(2+) as cofactor. It depends on Mn(2+) as a cofactor. Mg(2+) is required as a cofactor.

It catalyses the reaction diphosphate + H2O = 2 phosphate + H(+). Inhibited by AMP and ADP with 25% and 35% of activity remaining, respectively, at saturating conditions. Activated 5-fold by diadenosine polyphosphates(Ap[n]A) with n&gt;2 (Ap3A, Ap4A, Ap5A, Ap6A) at saturating conditions. The chain is Cobalt-dependent inorganic pyrophosphatase from Clostridium perfringens (strain 13 / Type A).